The sequence spans 990 residues: Translation initiation factor IF-2 (990 aa).

The tract at residues 92 to 402 (KKRTFVKRDD…QRDEHLQAAP (311 aa)) is disordered. Low complexity-rich tracts occupy residues 104 to 116 (EGAA…AAFA) and 131 to 151 (EAPA…AAPA). Residues 158 to 201 (ELARREEQARHQAELIRRQEAELAAKRAAREAREKREREAEERA) are compositionally biased toward basic and acidic residues. Residues 223-243 (TREQAAEATARNAAQLQARAK) show a composition bias toward low complexity. Residues 244–264 (AAAESKARSDEEAARAADLDA) show a composition bias toward basic and acidic residues. Composition is skewed to low complexity over residues 281–290 (ATPKKAVMVA) and 318–342 (PAVG…PGAG). 2 stretches are compositionally biased toward basic and acidic residues: residues 358–368 (PAKKKEIKTRG) and 386–398 (RRGD…DEHL). A tr-type G domain is found at 490–659 (PRAPVVTVMG…LLQADVMELK (170 aa)). Residues 499–506 (GHVDHGKT) are G1. 499-506 (GHVDHGKT) provides a ligand contact to GTP. A G2 region spans residues 524–528 (GITQH). The interval 545–548 (DTPG) is G3. GTP is bound by residues 545–549 (DTPGH) and 599–602 (TKAD). Residues 599-602 (TKAD) are G4. The G5 stretch occupies residues 635-637 (SSK).

The protein belongs to the TRAFAC class translation factor GTPase superfamily. Classic translation factor GTPase family. IF-2 subfamily.

The protein localises to the cytoplasm. In terms of biological role, one of the essential components for the initiation of protein synthesis. Protects formylmethionyl-tRNA from spontaneous hydrolysis and promotes its binding to the 30S ribosomal subunits. Also involved in the hydrolysis of GTP during the formation of the 70S ribosomal complex. In Verminephrobacter eiseniae (strain EF01-2), this protein is Translation initiation factor IF-2.